The following is a 63-amino-acid chain: Bucandin (63 aa).

5 cysteine pairs are disulfide-bonded: Cys-3-Cys-24, Cys-6-Cys-11, Cys-17-Cys-39, Cys-43-Cys-55, and Cys-56-Cys-61.

In terms of tissue distribution, expressed by the venom gland.

It is found in the secreted. Its function is as follows. This toxin is described as enhancing presynaptic acetylcholine release, but neither experimental results, nor references to other sources are available. The chain is Bucandin from Bungarus candidus (Malayan krait).